The primary structure comprises 246 residues: Probable transcriptional regulatory protein CLD_1467 (246 aa).

The protein belongs to the TACO1 family.

Its subcellular location is the cytoplasm. The chain is Probable transcriptional regulatory protein CLD_1467 from Clostridium botulinum (strain Okra / Type B1).